We begin with the raw amino-acid sequence, 227 residues long: Cytochrome c oxidase subunit 2 (227 aa).

Residues 1–14 (MAYPFQLGLQDATS) lie on the Mitochondrial intermembrane side of the membrane. A helical transmembrane segment spans residues 15–45 (PIMEELLHFHDHTLMIVFLISSLVLYIISLM). The Mitochondrial matrix segment spans residues 46-59 (LTTKLTHTSTMDAQ). A helical membrane pass occupies residues 60–87 (EVETVWTILPAIILILIALPSLRILYMM). Topologically, residues 88-227 (DEINNPSLTV…YFETWSALMV (140 aa)) are mitochondrial intermembrane. Positions 161, 196, 198, 200, 204, and 207 each coordinate Cu cation. Glu198 contributes to the Mg(2+) binding site. The residue at position 218 (Tyr218) is a Phosphotyrosine.

This sequence belongs to the cytochrome c oxidase subunit 2 family. Component of the cytochrome c oxidase (complex IV, CIV), a multisubunit enzyme composed of 14 subunits. The complex is composed of a catalytic core of 3 subunits MT-CO1, MT-CO2 and MT-CO3, encoded in the mitochondrial DNA, and 11 supernumerary subunits COX4I, COX5A, COX5B, COX6A, COX6B, COX6C, COX7A, COX7B, COX7C, COX8 and NDUFA4, which are encoded in the nuclear genome. The complex exists as a monomer or a dimer and forms supercomplexes (SCs) in the inner mitochondrial membrane with NADH-ubiquinone oxidoreductase (complex I, CI) and ubiquinol-cytochrome c oxidoreductase (cytochrome b-c1 complex, complex III, CIII), resulting in different assemblies (supercomplex SCI(1)III(2)IV(1) and megacomplex MCI(2)III(2)IV(2)). Found in a complex with TMEM177, COA6, COX18, COX20, SCO1 and SCO2. Interacts with TMEM177 in a COX20-dependent manner. Interacts with COX20. Interacts with COX16. Cu cation serves as cofactor.

The protein resides in the mitochondrion inner membrane. The catalysed reaction is 4 Fe(II)-[cytochrome c] + O2 + 8 H(+)(in) = 4 Fe(III)-[cytochrome c] + 2 H2O + 4 H(+)(out). Functionally, component of the cytochrome c oxidase, the last enzyme in the mitochondrial electron transport chain which drives oxidative phosphorylation. The respiratory chain contains 3 multisubunit complexes succinate dehydrogenase (complex II, CII), ubiquinol-cytochrome c oxidoreductase (cytochrome b-c1 complex, complex III, CIII) and cytochrome c oxidase (complex IV, CIV), that cooperate to transfer electrons derived from NADH and succinate to molecular oxygen, creating an electrochemical gradient over the inner membrane that drives transmembrane transport and the ATP synthase. Cytochrome c oxidase is the component of the respiratory chain that catalyzes the reduction of oxygen to water. Electrons originating from reduced cytochrome c in the intermembrane space (IMS) are transferred via the dinuclear copper A center (CU(A)) of subunit 2 and heme A of subunit 1 to the active site in subunit 1, a binuclear center (BNC) formed by heme A3 and copper B (CU(B)). The BNC reduces molecular oxygen to 2 water molecules using 4 electrons from cytochrome c in the IMS and 4 protons from the mitochondrial matrix. This is Cytochrome c oxidase subunit 2 (MT-CO2) from Canis lupus familiaris (Dog).